The sequence spans 701 residues: Heterodisulfide reductase subunit A-like protein (701 aa).

152-175 (GGGIAGIFAALDIANAGYKVYLVE) contacts FAD. Positions 239–268 (KQTWVDWDLCTGCGACTDVCPPKARVPDEF) constitute a 4Fe-4S ferredoxin-type 1 domain. [4Fe-4S] cluster is bound by residues Cys-248, Cys-251, Cys-254, Cys-326, Cys-627, Cys-630, Cys-633, Cys-637, Cys-660, Cys-663, Cys-666, and Cys-670. 2 4Fe-4S ferredoxin-type domains span residues 618-647 (LVSE…MTKY) and 651-680 (MRAE…LHGF).

The protein belongs to the HdrA family. As to quaternary structure, the heterodisulfide reductase is composed of three subunits; HdlA, HdlB and HdlC. It forms a complex with the F420-non-reducing hydrogenase (Mvh), which provides the reducing equivalents to the heterodisulfide reductase. [4Fe-4S] cluster is required as a cofactor. It depends on FAD as a cofactor.

The protein localises to the cytoplasm. Has oxidoreductase activity. The Hdl and Mvh subunits may together mediate electron transfer from hydrogen to an unidentified electron acceptor on the cytoplasmic side of the membrane. This chain is Heterodisulfide reductase subunit A-like protein (hdlA), found in Archaeoglobus profundus (strain DSM 5631 / JCM 9629 / NBRC 100127 / Av18).